Here is a 507-residue protein sequence, read N- to C-terminus: Probable cytochrome P450 6a18 (507 aa).

Position 451 (Cys-451) interacts with heme.

It belongs to the cytochrome P450 family. Requires heme as cofactor.

It is found in the endoplasmic reticulum membrane. Its subcellular location is the microsome membrane. May be involved in the metabolism of insect hormones and in the breakdown of synthetic insecticides. The sequence is that of Probable cytochrome P450 6a18 (Cyp6a18) from Drosophila melanogaster (Fruit fly).